A 599-amino-acid chain; its full sequence is Aspartate--tRNA ligase (599 aa).

Glutamate 180 is a binding site for L-aspartate. The aspartate stretch occupies residues 204–207 (QIFK). An L-aspartate-binding site is contributed by arginine 226. Residues 226–228 (RDE) and glutamine 235 each bind ATP. An L-aspartate-binding site is contributed by histidine 454. Glutamate 488 serves as a coordination point for ATP. Arginine 495 contacts L-aspartate. Residue 540–543 (GLDR) coordinates ATP.

This sequence belongs to the class-II aminoacyl-tRNA synthetase family. Type 1 subfamily. As to quaternary structure, homodimer.

It localises to the cytoplasm. It carries out the reaction tRNA(Asp) + L-aspartate + ATP = L-aspartyl-tRNA(Asp) + AMP + diphosphate. Its function is as follows. Catalyzes the attachment of L-aspartate to tRNA(Asp) in a two-step reaction: L-aspartate is first activated by ATP to form Asp-AMP and then transferred to the acceptor end of tRNA(Asp). The chain is Aspartate--tRNA ligase from Clostridium beijerinckii (strain ATCC 51743 / NCIMB 8052) (Clostridium acetobutylicum).